The primary structure comprises 429 residues: MVSKKQKFLTVILVIVLAIVIVGGVFGISFVKGRVTFPWQLQNSEAKTEQVKEPAKEEPKLVIKEKKQDESAKKEQELKKAKEEAEAAVEKETEKTEEEPVDNLLNDMKLKYYGKLAVEGSHLVDADGHEVLLMGVSTHGINWYPEYASAETIKSLRDTWGINVIRLAMYTSDYNGYCVAGKENQEKLKDIIDDAVEAATDNDMYVIIDWHTLNDADPNEYKADAIQFFGEMVRKYKDNENVIYEICNEPNGDTTWNDVRRYANEVIPVIRNVDAIILVGTPKWATDLDSVLDKPLDFDNIMYTYHFYAGTHHKAERNALRDALDEGLPVFISEYGLVDADGDGNLNEKEADYWYDMIRKEYGVSSCMWNLSNKDEGSAMINADCDKLSDFTEEDLSESAMWLIDQISQLKHSDLEQGVDWITPENNNR.

The first 34 residues, Met-1–Arg-34, serve as a signal peptide directing secretion. Residues Ala-46–Glu-94 show a composition bias toward basic and acidic residues. The tract at residues Ala-46–Pro-100 is disordered. Glu-249 serves as the catalytic Proton donor. Residue Glu-334 is the Nucleophile of the active site.

The protein belongs to the glycosyl hydrolase 5 (cellulase A) family.

It catalyses the reaction Endohydrolysis of (1-&gt;4)-beta-D-glucosidic linkages in cellulose, lichenin and cereal beta-D-glucans.. This is Endoglucanase A (celA) from Butyrivibrio fibrisolvens.